A 435-amino-acid chain; its full sequence is Exopolysaccharide production protein ExoQ (435 aa).

The next 10 membrane-spanning stretches (helical) occupy residues 11–31 (PGANEVYGIFALALSLFVFAY), 35–55 (FGQVSILAYYGLWLPLVLVDY), 65–85 (YLWIFAFTIFACITIFWSAAP), 117–137 (GMIAGAAIVLLYSLLFGTYHY), 156–176 (LGFYASLGIYFAFAAVFVLGE), 178–198 (GLWMGAAGGAGLLAAYCLLTS), 203–223 (SVLTTAAVIGLCLGMRAITAL), 230–250 (LLFIAASVFGGVAAVAMIYAG), 325–345 (VVETGLIGLILLTMVLVTAFF), and 361–381 (MVLFGVGALLFVRAFVEIDIL).

Its subcellular location is the cell membrane. The protein operates within glycan metabolism; exopolysaccharide biosynthesis. Its function is as follows. Involved in the production of exopolysaccharide. In Rhizobium meliloti (strain 1021) (Ensifer meliloti), this protein is Exopolysaccharide production protein ExoQ (exoQ).